The primary structure comprises 311 residues: MSGENNSSVTEFILAGLSEQPELQLPLFLLFLGIYVVTVVGNLGMTTLIWLSSHLHTPMYYFLSSLSFIDFCHSTVITPKMLVNFVTEKNIISYPECMTQLYFFLVFAIAECHMLAAMAYDRYMAICSPLLYSVIISNKACFSLILGVYIIGLVCASVHTGCMFRVQFCKFDLINHYFCDLLPLLKLSCSSIYVNKLLILCVGAFNILVPSLTILCSYIFIIASILHIRSTEGRSKAFSTCSSHMLAVVIFFGSAAFMYLQPSSISSMDQGKVSSVFYTIIVPMLNPLIYSLRNKDVHVSLKKMLQRRTLL.

Residues 1 to 25 (MSGENNSSVTEFILAGLSEQPELQL) are Extracellular-facing. Asn5 and Asn6 each carry an N-linked (GlcNAc...) asparagine glycan. The helical transmembrane segment at 26-46 (PLFLLFLGIYVVTVVGNLGMT) threads the bilayer. The Cytoplasmic segment spans residues 47–54 (TLIWLSSH). The helical transmembrane segment at 55-75 (LHTPMYYFLSSLSFIDFCHST) threads the bilayer. Residues 76-99 (VITPKMLVNFVTEKNIISYPECMT) are Extracellular-facing. A disulfide bond links Cys97 and Cys189. A helical transmembrane segment spans residues 100 to 120 (QLYFFLVFAIAECHMLAAMAY). Topologically, residues 121–139 (DRYMAICSPLLYSVIISNK) are cytoplasmic. The helical transmembrane segment at 140–160 (ACFSLILGVYIIGLVCASVHT) threads the bilayer. The Extracellular segment spans residues 161–197 (GCMFRVQFCKFDLINHYFCDLLPLLKLSCSSIYVNKL). Residues 198–217 (LILCVGAFNILVPSLTILCS) form a helical membrane-spanning segment. Topologically, residues 218–237 (YIFIIASILHIRSTEGRSKA) are cytoplasmic. The chain crosses the membrane as a helical span at residues 238–258 (FSTCSSHMLAVVIFFGSAAFM). Residues 259–271 (YLQPSSISSMDQG) are Extracellular-facing. The helical transmembrane segment at 272 to 292 (KVSSVFYTIIVPMLNPLIYSL) threads the bilayer. The Cytoplasmic portion of the chain corresponds to 293-311 (RNKDVHVSLKKMLQRRTLL).

The protein belongs to the G-protein coupled receptor 1 family.

The protein localises to the cell membrane. Functionally, odorant receptor. In Homo sapiens (Human), this protein is Olfactory receptor 8G1 (OR8G1).